A 957-amino-acid chain; its full sequence is Mediator of RNA polymerase II transcription subunit 16 (957 aa).

Positions 855–883 (YTEVDAAPSGKTNAQGPPQQPQPQQQRRR) are disordered.

Belongs to the Mediator complex subunit 16 family. In terms of assembly, component of the Mediator complex.

The protein resides in the nucleus. In terms of biological role, component of the Mediator complex, a coactivator involved in the regulated transcription of nearly all RNA polymerase II-dependent genes. Mediator functions as a bridge to convey information from gene-specific regulatory proteins to the basal RNA polymerase II transcription machinery. Mediator is recruited to promoters by direct interactions with regulatory proteins and serves as a scaffold for the assembly of a functional preinitiation complex with RNA polymerase II and the general transcription factors. In Aspergillus clavatus (strain ATCC 1007 / CBS 513.65 / DSM 816 / NCTC 3887 / NRRL 1 / QM 1276 / 107), this protein is Mediator of RNA polymerase II transcription subunit 16 (sin4).